We begin with the raw amino-acid sequence, 197 residues long: Molybdenum cofactor guanylyltransferase (197 aa).

Residues leucine 10–glycine 12, lysine 23, aspartate 69, and aspartate 99 each bind GTP. Aspartate 99 lines the Mg(2+) pocket.

Belongs to the MobA family. In terms of assembly, monomer. Requires Mg(2+) as cofactor.

The protein resides in the cytoplasm. It catalyses the reaction Mo-molybdopterin + GTP + H(+) = Mo-molybdopterin guanine dinucleotide + diphosphate. In terms of biological role, transfers a GMP moiety from GTP to Mo-molybdopterin (Mo-MPT) cofactor (Moco or molybdenum cofactor) to form Mo-molybdopterin guanine dinucleotide (Mo-MGD) cofactor. The chain is Molybdenum cofactor guanylyltransferase from Serratia proteamaculans (strain 568).